A 520-amino-acid polypeptide reads, in one-letter code: MPKKKGKGKGKGKGKGKGKKDGKHDSKADRESEIEKLKSNASLWEAKFTVTDISRLEYREAARALAKANEELENQQYRAEKDTKDIIAFLKRTDFEKTATIAALEEELKRERAKSAQEKDLLVAEYMQKIDALEEMFRQRSGDFQRMQGELKTIKHYRKIKANLEEDLISIREKMYVDGRAHQESLARTEYKFYMARIRIEKEAEQKISQLAEQAHYEAVDQLGAASQTVITENIRLNEGLDYHVKEAEQLKRINVALTEKNSSLALFKETNELMKKEADSHVQSQHSEISELTAKLSTLEQALGIMSREFEQERVEMERSAGVNNTELEELEMLLAAREKELSKVKQLAQSIIEQRRELELFFHEALNHARKEIKAQQQHYRQEALKSYRWRMNEAHAGRLEFPRIRTFSNAPNSTNDVQTELEDSDKWNNLRSSNVDISDLTWEQKERLLNLLFAKLNGIKTRKAAHPPALSASSSEKIQVSSDAGSTVESPSMTFITQMTMANMTSDPFVLPALKST.

Over residues methionine 1–aspartate 21 the composition is skewed to basic residues. Residues methionine 1 to isoleucine 34 are disordered. Basic and acidic residues predominate over residues glycine 22–isoleucine 34. 2 coiled-coil regions span residues lysine 27–methionine 175 and valine 245–alanine 386. Positions alanine 468–glutamate 492 are disordered. Residues histidine 469–serine 478 show a composition bias toward low complexity. Positions glutamate 479–glutamate 492 are enriched in polar residues.

It belongs to the BBOF1 family.

It is found in the cytoplasm. The protein resides in the cytoskeleton. Its subcellular location is the cilium basal body. Its function is as follows. Basal body protein required in multiciliate cells to align and maintain cilia orientation in response to flow. May act by mediating a maturation step that stabilizes and aligns cilia orientation. Not required to respond to planar cell polarity (PCP) or flow-based orientation cues. The polypeptide is Basal body-orientation factor 1 (Danio rerio (Zebrafish)).